A 597-amino-acid polypeptide reads, in one-letter code: Adenine deaminase (597 aa).

It belongs to the metallo-dependent hydrolases superfamily. Adenine deaminase family. Mn(2+) is required as a cofactor.

The catalysed reaction is adenine + H2O + H(+) = hypoxanthine + NH4(+). The sequence is that of Adenine deaminase from Paracoccus denitrificans (strain Pd 1222).